A 206-amino-acid polypeptide reads, in one-letter code: 2-phospho-L-lactate guanylyltransferase (206 aa).

The protein belongs to the CofC family. Homodimer.

It catalyses the reaction (2S)-2-phospholactate + GTP + H(+) = (2S)-lactyl-2-diphospho-5'-guanosine + diphosphate. The protein operates within cofactor biosynthesis; coenzyme F420 biosynthesis. In terms of biological role, guanylyltransferase that catalyzes the activation of (2S)-2-phospholactate (2-PL) as (2S)-lactyl-2-diphospho-5'-guanosine, via the condensation of 2-PL with GTP. It is involved in the biosynthesis of coenzyme F420, a hydride carrier cofactor. This chain is 2-phospho-L-lactate guanylyltransferase, found in Archaeoglobus profundus (strain DSM 5631 / JCM 9629 / NBRC 100127 / Av18).